Consider the following 627-residue polypeptide: Nuclear receptor subfamily 4 group A member 3 (627 aa).

Residues 1–112 are activation function (AF)-1 domain; it reads MPCVQAQYSP…HHHHHHHHHQ (112 aa). The required for DNA-PK heterotrimer stretch occupies residues 1–139; sequence MPCVQAQYSP…PSTSMYFKQS (139 aa). Residues 1–292 are interaction with NCOA1, NCOA2, NCOA3 and KAT2B; the sequence is MPCVQAQYSP…NRSSSSGEGT (292 aa). Disordered stretches follow at residues 96–162 and 268–289; these read HGYH…DELP and ASSLLGESPSLPSPPNRSSSSG. A compositionally biased stretch (basic residues) spans 97 to 112; that stretch reads GYHHHHHHHHHHHHHQ. Residues 141–150 show a composition bias toward pro residues; the sequence is PSTPTTPGFP. Over residues 269–288 the composition is skewed to low complexity; that stretch reads SSLLGESPSLPSPPNRSSSS. The segment at residues 290 to 365 is a DNA-binding region (nuclear receptor); the sequence is EGTCAVCGDN…VGMVKEVVRT (76 aa). 2 NR C4-type zinc fingers span residues 293-313 and 329-353; these read CAVCGDNAACQHYGVRTCEGC and CLANKNCPVDKRRRNRCQYCRFQKC. A disordered region spans residues 365–395; it reads TDSLKGRRGRLPSKPKSPLQQEPSQPSPPSP. Positions 378 to 388 are enriched in low complexity; it reads KPKSPLQQEPS. Positions 380–627 are interaction with KAT2B; sequence KSPLQQEPSQ…DKLFLDTLPF (248 aa). An NR LBD domain is found at 395-624; that stretch reads PPICMMNALV…SVIDKLFLDT (230 aa).

This sequence belongs to the nuclear hormone receptor family. NR4 subfamily. Interacts with SIX3 (via homeobox); differentially regulates the transcriptional activities of NR4A3. Interacts with NCOA2; potentiates the activity of the NR4A3. Interacts with NCOA1, NCOA3, MED1 and KAT2B. Interacts with EP300 and NCOA2; mediates the recruitment of MED1 in the coactivator complex. Interacts with the constituents of DNA-PK heterotrimer PRKDC, XRCC6 and XRCC5; phosphorylates and prevents NR4A3 ubiquitinylation and degradation. Interacts with NR3C1 (via nuclear receptor DNA-binding domain); the interactions represses transcription activity of NR4A3 on the POMC promoter Nur response element (NurRE). Interacts with TRIM28; the interactions potentiates NR4A3 activity on NurRE promoter. Binds DNA as a monomer and homodimer. Interacts with PARP1; activates PARP1 by improving acetylation of PARP1 and suppressing the interaction between PARP1 and SIRT1. Post-translationally, phosphorylated by PRKDC. In terms of tissue distribution, ubiquitous. Highest levels of expression in brain. Widely expressed throughout the arcuate nucleus region of the hypothalamus, namely in AgRP neurons.

Its subcellular location is the nucleus. In terms of biological role, transcriptional activator that binds to regulatory elements in promoter regions in a cell- and response element (target)-specific manner. Induces gene expression by binding as monomers to the NR4A1 response element (NBRE) 5'-AAAAGGTCA-3' site and as homodimers to the Nur response element (NurRE) site in the promoter of their regulated target genes. Plays a role in the regulation of proliferation, survival and differentiation of many different cell types and also in metabolism and inflammation. Mediates proliferation of vascular smooth muscle, myeloid progenitor cell and type B pancreatic cells; promotes mitogen-induced vascular smooth muscle cell proliferation through transactivation of SKP2 promoter by binding a NBRE site. Upon PDGF stimulation, stimulates vascular smooth muscle cell proliferation by regulating CCND1 and CCND2 expression. In islets, induces type B pancreatic cell proliferation through up-regulation of genes that activate cell cycle, as well as genes that cause degradation of the CDKN1A. Negatively regulates myeloid progenitor cell proliferation by repressing RUNX1 in a NBRE site-independent manner. During inner ear, plays a role as a key mediator of the proliferative growth phase of semicircular canal development. Also mediates survival of neuron and smooth muscle cells; mediates CREB-induced neuronal survival, and during hippocampus development, plays a critical role in pyramidal cell survival and axonal guidance. Is required for S phase entry of the cell cycle and survival of smooth muscle cells by inducing CCND1, resulting in RB1 phosphorylation. Binds to NBRE motif in CCND1 promoter, resulting in the activation of the promoter and CCND1 transcription. Also plays a role in inflammation; upon TNF stimulation, mediates monocyte adhesion by inducing the expression of VCAM1 and ICAM1 by binding to the NBRE consensus site. In mast cells activated by Fc-epsilon receptor cross-linking, promotes the synthesis and release of cytokines but impairs events leading to degranulation. Also plays a role in metabolism; by modulating feeding behavior; and by playing a role in energy balance by inhibiting the glucocorticoid-induced orexigenic neuropeptides AGRP expression, at least in part by forming a complex with activated NR3C1 on the AGRP- glucocorticoid response element (GRE), and thus weakening the DNA binding activity of NR3C1. Upon catecholamines stimulation, regulates gene expression that controls oxidative metabolism in skeletal muscle. Plays a role in glucose transport by regulating translocation of the SLC2A4 glucose transporter to the cell surface. Finally, during gastrulation plays a crucial role in the formation of anterior mesoderm by controlling cell migration. Inhibits adipogenesis. Also participates in cardiac hypertrophy by activating PARP1. This is Nuclear receptor subfamily 4 group A member 3 (Nr4a3) from Mus musculus (Mouse).